Here is an 88-residue protein sequence, read N- to C-terminus: Large ribosomal subunit protein bL27 (88 aa).

Positions 1–21 (MAHKKGASSSRNGRDSNAKRL) are disordered.

It belongs to the bacterial ribosomal protein bL27 family.

The chain is Large ribosomal subunit protein bL27 from Thermobifida fusca (strain YX).